We begin with the raw amino-acid sequence, 779 residues long: Ribonucleoside-diphosphate reductase large subunit (779 aa).

Residues Ser-178, 193-194 (SC), Gly-222, 420-424 (NLCIE), and 614-618 (PTATS) each bind substrate. Cys-194 and Cys-440 are oxidised to a cystine. The Proton acceptor role is filled by Asn-420. Catalysis depends on Cys-422, which acts as the Cysteine radical intermediate. The active-site Proton acceptor is the Glu-424.

This sequence belongs to the ribonucleoside diphosphate reductase large chain family. As to quaternary structure, heterotetramer composed of a homodimer of the large subunit (R1) and a homodimer of the small subunit (R2). Larger multisubunit protein complex are also active, composed of (R1)n(R2)n.

It catalyses the reaction a 2'-deoxyribonucleoside 5'-diphosphate + [thioredoxin]-disulfide + H2O = a ribonucleoside 5'-diphosphate + [thioredoxin]-dithiol. Under complex allosteric control mediated by deoxynucleoside triphosphates and ATP binding. The type of nucleotide bound at the specificity site determines substrate preference. It seems probable that ATP makes the enzyme reduce CDP and UDP, dGTP favors ADP reduction and dTTP favors GDP reduction. Ribonucleoside-diphosphate reductase holoenzyme provides the precursors necessary for viral DNA synthesis. Allows virus growth in non-dividing cells. Catalyzes the biosynthesis of deoxyribonucleotides from the corresponding ribonucleotides. The sequence is that of Ribonucleoside-diphosphate reductase large subunit from African swine fever virus (isolate Tick/Malawi/Lil 20-1/1983) (ASFV).